A 70-amino-acid polypeptide reads, in one-letter code: Testis-expressed protein 53 (70 aa).

In terms of tissue distribution, expressed in Testis.

The polypeptide is Testis-expressed protein 53 (Homo sapiens (Human)).